We begin with the raw amino-acid sequence, 349 residues long: Soluble TNF receptor II (349 aa).

Residues 1–19 (MKSVLYSYILFLSCIIING) form the signal peptide. TNFR-Cys repeat units lie at residues 31-65 (KCKDNEYKRHNLCCLSCPPGTYASRLCDSKTNTQC) and 67-108 (PCGS…NRIC). Intrachain disulfides connect C32–C43, C44–C57, C47–C65, C68–C83, C86–C100, and C90–C108. 3 N-linked (GlcNAc...) asparagine; by host glycosylation sites follow: N101, N189, and N248.

Belongs to the orthopoxvirus OPG002 family.

Functionally, inhibits host immune defense by binding to host TNF and various chemokines in the extracellular space. Binds host CC chemokines (beta chemokines) and CXC chemokines (alpha chemokines). The polypeptide is Soluble TNF receptor II (OPG002) (Camelus).